The chain runs to 367 residues: Aminomethyltransferase (367 aa).

The protein belongs to the GcvT family. As to quaternary structure, the glycine cleavage system is composed of four proteins: P, T, L and H.

The enzyme catalyses N(6)-[(R)-S(8)-aminomethyldihydrolipoyl]-L-lysyl-[protein] + (6S)-5,6,7,8-tetrahydrofolate = N(6)-[(R)-dihydrolipoyl]-L-lysyl-[protein] + (6R)-5,10-methylene-5,6,7,8-tetrahydrofolate + NH4(+). Functionally, the glycine cleavage system catalyzes the degradation of glycine. This chain is Aminomethyltransferase, found in Shouchella clausii (strain KSM-K16) (Alkalihalobacillus clausii).